A 981-amino-acid chain; its full sequence is Isoleucine--tRNA ligase (981 aa).

The 'HIGH' region motif lies at 50-60; it reads PTTNGMPHVGH. Positions 604–608 match the 'KMSKS' region motif; that stretch reads KMSKS. Position 607 (K607) interacts with ATP.

The protein belongs to the class-I aminoacyl-tRNA synthetase family. IleS type 2 subfamily. In terms of assembly, monomer. Zn(2+) is required as a cofactor.

The protein resides in the cytoplasm. The enzyme catalyses tRNA(Ile) + L-isoleucine + ATP = L-isoleucyl-tRNA(Ile) + AMP + diphosphate. Catalyzes the attachment of isoleucine to tRNA(Ile). As IleRS can inadvertently accommodate and process structurally similar amino acids such as valine, to avoid such errors it has two additional distinct tRNA(Ile)-dependent editing activities. One activity is designated as 'pretransfer' editing and involves the hydrolysis of activated Val-AMP. The other activity is designated 'posttransfer' editing and involves deacylation of mischarged Val-tRNA(Ile). This chain is Isoleucine--tRNA ligase, found in Pyrobaculum aerophilum (strain ATCC 51768 / DSM 7523 / JCM 9630 / CIP 104966 / NBRC 100827 / IM2).